Reading from the N-terminus, the 744-residue chain is Tripartite motif-containing protein 2 (744 aa).

Ser10 carries the phosphoserine modification. The segment at 23-64 (CSICLERYKNPKVLPCLHTFCERCLQNYIPAHSLTLSCPVCR) adopts an RING-type zinc-finger fold. Residues 113-154 (GKPLSCPNHDGNVMEFYCQSCETAMCRECTEGEHAEHPTVPL) form a B box-type zinc finger. Positions 118, 121, 141, and 146 each coordinate Zn(2+). One copy of the Filamin repeat lies at 320-421 (TTNAVASETV…IRGSPFKLKV (102 aa)). Position 371 is a phosphothreonine (Thr371). A phosphoserine mark is found at Ser375, Ser424, and Ser428. Positions 432–462 (EGVKRRVKSPGSGHVKQKAVKRPASMYSTGK) are disordered. 6 NHL repeats span residues 473 to 516 (IFRV…FSND), 520 to 563 (KSRF…FSSD), 564 to 605 (GKFK…FQPN), 609 to 652 (VTRF…FNQE), 656 to 699 (MLKF…FDGS), and 700 to 743 (GSFL…YRYL).

Belongs to the TRIM/RBCC family. In terms of assembly, forms homooligomers. Interacts with TRIM3; this interaction reduces TRIM2 activity. Interacts with myosin V; myosin V may not be a substrate for ubiquitination. Interacts with NEFL. Interacts with phosphorylated BCL2L11. Interacts with SIRPA. In terms of processing, RING-type zinc finger-dependent and UBE2D1-dependent autoubiquitination.

The protein resides in the cytoplasm. The catalysed reaction is S-ubiquitinyl-[E2 ubiquitin-conjugating enzyme]-L-cysteine + [acceptor protein]-L-lysine = [E2 ubiquitin-conjugating enzyme]-L-cysteine + N(6)-ubiquitinyl-[acceptor protein]-L-lysine.. The protein operates within protein modification; protein ubiquitination. Its function is as follows. UBE2D1-dependent E3 ubiquitin-protein ligase that mediates the ubiquitination of NEFL and of phosphorylated BCL2L11. Plays a neuroprotective function. May play a role in neuronal rapid ischemic tolerance. Plays a role in antiviral immunity and limits New World arenavirus infection independently of its ubiquitin ligase activity. This Callithrix jacchus (White-tufted-ear marmoset) protein is Tripartite motif-containing protein 2 (TRIM2).